We begin with the raw amino-acid sequence, 380 residues long: Glucose-1-phosphate adenylyltransferase (380 aa).

Alpha-D-glucose 1-phosphate is bound by residues G164, 179 to 180, and S190; that span reads EK.

The protein belongs to the bacterial/plant glucose-1-phosphate adenylyltransferase family. As to quaternary structure, homotetramer.

The enzyme catalyses alpha-D-glucose 1-phosphate + ATP + H(+) = ADP-alpha-D-glucose + diphosphate. It participates in glycan biosynthesis; glycogen biosynthesis. Functionally, involved in the biosynthesis of ADP-glucose, a building block required for the elongation reactions to produce glycogen. Catalyzes the reaction between ATP and alpha-D-glucose 1-phosphate (G1P) to produce pyrophosphate and ADP-Glc. The sequence is that of Glucose-1-phosphate adenylyltransferase from Lacticaseibacillus casei (strain BL23) (Lactobacillus casei).